Reading from the N-terminus, the 542-residue chain is MTRYIFVTGGVVSSLGKGIASASLAAILEARGLKVTMLKLDPYINVDPGTMSPFQHGEVFVTHDGAETDLDLGHYERFIRTTMTQNNNFTTGRIYEHVLRKERRGDYLGATIQVIPHITDEIKRRIIKGAGDADVALVEIGGTVGDIESQPFLEAIRQLRVEVGSKRAMLMHLTLVPYIATAGETKTKPTQHSVKELRSIGLQPDVLICRSDHPVDASSRRKIALFTNVEERAVISLEDVDTIYKIPGVLHAQGLDDFVVERFGLQCNGADLSEWDKVVDAKLNPEHEVTIAMVGKYMELLDAYKSLIEAMSHAGITNRTKVNLRYIDSEDIENQGTSLLEGADAILVPGGFGLRGVEGKITAVQYARENKVPYLGICLGMQVAVIEFARNVMGWKDANSTEFDRNSGHPVVGLITEWADATGAVETRDEASDLGGTMRLGAQDCQLAAGSKVHDCYGKDVITERHRHRYEVNNNLLPQLVEAGLVVSGRSEDGALVEVVESKDHPWFVACQFHPEFTSTPRDGHPLFSGFVKAALAQKNKA.

Positions 1-265 are amidoligase domain; that stretch reads MTRYIFVTGG…DDFVVERFGL (265 aa). Serine 13 provides a ligand contact to CTP. Residue serine 13 coordinates UTP. ATP contacts are provided by residues 14-19 and aspartate 71; that span reads SLGKGI. Residues aspartate 71 and glutamate 139 each coordinate Mg(2+). CTP contacts are provided by residues 146–148, 186–191, and lysine 222; these read DIE and KTKPTQ. UTP is bound by residues 186–191 and lysine 222; that span reads KTKPTQ. Residues 290 to 541 enclose the Glutamine amidotransferase type-1 domain; sequence TIAMVGKYME…VKAALAQKNK (252 aa). An L-glutamine-binding site is contributed by glycine 351. Cysteine 378 (nucleophile; for glutamine hydrolysis) is an active-site residue. Residues 379–382, glutamate 402, and arginine 469 each bind L-glutamine; that span reads LGMQ. Residues histidine 514 and glutamate 516 contribute to the active site.

The protein belongs to the CTP synthase family. Homotetramer.

The catalysed reaction is UTP + L-glutamine + ATP + H2O = CTP + L-glutamate + ADP + phosphate + 2 H(+). It catalyses the reaction L-glutamine + H2O = L-glutamate + NH4(+). The enzyme catalyses UTP + NH4(+) + ATP = CTP + ADP + phosphate + 2 H(+). The protein operates within pyrimidine metabolism; CTP biosynthesis via de novo pathway; CTP from UDP: step 2/2. With respect to regulation, allosterically activated by GTP, when glutamine is the substrate; GTP has no effect on the reaction when ammonia is the substrate. The allosteric effector GTP functions by stabilizing the protein conformation that binds the tetrahedral intermediate(s) formed during glutamine hydrolysis. Inhibited by the product CTP, via allosteric rather than competitive inhibition. Its function is as follows. Catalyzes the ATP-dependent amination of UTP to CTP with either L-glutamine or ammonia as the source of nitrogen. Regulates intracellular CTP levels through interactions with the four ribonucleotide triphosphates. This Pseudomonas putida (strain ATCC 700007 / DSM 6899 / JCM 31910 / BCRC 17059 / LMG 24140 / F1) protein is CTP synthase.